Here is a 533-residue protein sequence, read N- to C-terminus: Zinc finger protein 692 (533 aa).

2 disordered regions span residues 124–251 (SLIP…PATL) and 290–310 (TESL…TCDE). A compositionally biased stretch (basic and acidic residues) spans 149–178 (EARRKQEAEGLECEHRERTQETRLSRRVEP). Acidic residues predominate over residues 190–208 (QVVEEEEEEEEEEEEEELL). Ser233 carries the phosphoserine modification. The segment covering 290-305 (TESLDSPGSQAQSAPN) has biased composition (polar residues). 5 consecutive C2H2-type zinc fingers follow at residues 329-354 (MPCD…KYQH), 360-384 (FCCP…VKLH), 390-412 (YICE…RRIH), 418-440 (LQCE…RRKH), and 449-472 (FPCE…SKSH). Ser471 carries the phosphoserine modification. Residues 478 to 533 (VQESPGSLGSSPSISAPEPLQSPEGTSFSTSYDSNPAPSTSISSPGVPAPRNTEKS) are disordered. Low complexity predominate over residues 481–492 (SPGSLGSSPSIS). The segment covering 500–521 (PEGTSFSTSYDSNPAPSTSISS) has biased composition (polar residues).

Belongs to the krueppel C2H2-type zinc-finger protein family. Phosphorylation at Ser-471 results in loss of DNA-binding activity.

It is found in the nucleus. In terms of biological role, may act as an transcriptional repressor for PCK1 gene expression, in turns may participate in the hepatic gluconeogenesis regulation through the activated AMPK signaling pathway. The protein is Zinc finger protein 692 of Rattus norvegicus (Rat).